Consider the following 439-residue polypeptide: Signal recognition particle 54 kDa protein (439 aa).

GTP contacts are provided by residues 104-111 (GLQGSGKT), 184-188 (DTAGR), and 242-245 (SKLD).

Belongs to the GTP-binding SRP family. SRP54 subfamily. Part of the signal recognition particle protein translocation system, which is composed of SRP and FtsY. Archaeal SRP consists of a 7S RNA molecule of 300 nucleotides and two protein subunits: SRP54 and SRP19.

It localises to the cytoplasm. The enzyme catalyses GTP + H2O = GDP + phosphate + H(+). Involved in targeting and insertion of nascent membrane proteins into the cytoplasmic membrane. Binds to the hydrophobic signal sequence of the ribosome-nascent chain (RNC) as it emerges from the ribosomes. The SRP-RNC complex is then targeted to the cytoplasmic membrane where it interacts with the SRP receptor FtsY. The sequence is that of Signal recognition particle 54 kDa protein from Methanococcoides burtonii (strain DSM 6242 / NBRC 107633 / OCM 468 / ACE-M).